We begin with the raw amino-acid sequence, 78 residues long: MFTMKKSLLLLFFLGTISLSLCEEERGADEEEGDGEKLMKRGLFSILKGVGKIAIKGLGKNLGKMGLDLVSCKISKEC.

An N-terminal signal peptide occupies residues 1–22 (MFTMKKSLLLLFFLGTISLSLC). A propeptide spanning residues 23–39 (EEERGADEEEGDGEKLM) is cleaved from the precursor. Cys-72 and Cys-78 are oxidised to a cystine.

As to expression, expressed by the skin glands.

Its subcellular location is the secreted. Its function is as follows. Antimicrobial peptide. This is Esculentin-2Vb from Odorrana versabilis (Chinese bamboo leaf odorous frog).